Here is a 294-residue protein sequence, read N- to C-terminus: UDP-3-O-acyl-N-acetylglucosamine deacetylase (294 aa).

Positions 75, 232, and 236 each coordinate Zn(2+). His259 (proton donor) is an active-site residue.

The protein belongs to the LpxC family. Requires Zn(2+) as cofactor.

It catalyses the reaction a UDP-3-O-[(3R)-3-hydroxyacyl]-N-acetyl-alpha-D-glucosamine + H2O = a UDP-3-O-[(3R)-3-hydroxyacyl]-alpha-D-glucosamine + acetate. It functions in the pathway glycolipid biosynthesis; lipid IV(A) biosynthesis; lipid IV(A) from (3R)-3-hydroxytetradecanoyl-[acyl-carrier-protein] and UDP-N-acetyl-alpha-D-glucosamine: step 2/6. Catalyzes the hydrolysis of UDP-3-O-myristoyl-N-acetylglucosamine to form UDP-3-O-myristoylglucosamine and acetate, the committed step in lipid A biosynthesis. In Campylobacter jejuni (strain RM1221), this protein is UDP-3-O-acyl-N-acetylglucosamine deacetylase.